Here is a 468-residue protein sequence, read N- to C-terminus: Chromosomal replication initiator protein DnaA (468 aa).

The tract at residues 1–90 (MTQEKWGLLC…NSPMRPARAA (90 aa)) is domain I, interacts with DnaA modulators. The segment at 91–126 (RPAAAAAAAAAAVEAPQVSAPRATDTSDVLDGLQAA) is domain II. A domain III, AAA+ region region spans residues 127-348 (PLDPRFTFDS…GALTRLFAFA (222 aa)). ATP is bound by residues Gly171, Gly173, Lys174, and Thr175. A domain IV, binds dsDNA region spans residues 349–468 (SLVGREIDME…VEMLRRALEA (120 aa)).

The protein belongs to the DnaA family. As to quaternary structure, oligomerizes as a right-handed, spiral filament on DNA at oriC.

It is found in the cytoplasm. Plays an essential role in the initiation and regulation of chromosomal replication. ATP-DnaA binds to the origin of replication (oriC) to initiate formation of the DNA replication initiation complex once per cell cycle. Binds the DnaA box (a 9 base pair repeat at the origin) and separates the double-stranded (ds)DNA. Forms a right-handed helical filament on oriC DNA; dsDNA binds to the exterior of the filament while single-stranded (ss)DNA is stabiized in the filament's interior. The ATP-DnaA-oriC complex binds and stabilizes one strand of the AT-rich DNA unwinding element (DUE), permitting loading of DNA polymerase. After initiation quickly degrades to an ADP-DnaA complex that is not apt for DNA replication. Binds acidic phospholipids. The polypeptide is Chromosomal replication initiator protein DnaA (Ruegeria pomeroyi (strain ATCC 700808 / DSM 15171 / DSS-3) (Silicibacter pomeroyi)).